Here is a 601-residue protein sequence, read N- to C-terminus: Leucine zipper putative tumor suppressor 1 (601 aa).

The N-myristoyl glycine moiety is linked to residue G2. The segment at 135-190 (GAILHSSPESTNHQLHPMPPDKPKEQELKPGLCSGALSDSGRNSMSSLPTHSTTSS) is disordered. Positions 153–162 (PPDKPKEQEL) are enriched in basic and acidic residues. The segment covering 174-190 (SGRNSMSSLPTHSTTSS) has biased composition (polar residues). The stretch at 255 to 573 (PLSTDECTIQ…RLEKALQQLA (319 aa)) forms a coiled coil.

The protein belongs to the LZTS family. Binds EEF1G, TLK2 and CDK1. Post-translationally, phosphorylated on serine residues. Hyperphosphorylated by the cAMP-dependent kinase PKA during cell-cycle progression. As to expression, highly expressed in brain, in particular in cortex, the CA2 region of the hippocampus, olfactory bulb, striatum and pons. Not detectable in the other tissues tested.

It is found in the cytoplasm. It localises to the cell membrane. The protein localises to the cell projection. The protein resides in the dendritic spine. Its subcellular location is the postsynaptic density. It is found in the synapse. Involved in the regulation of cell growth. May stabilize the active CDC2-cyclin B1 complex and thereby contribute to the regulation of the cell cycle and the prevention of uncontrolled cell proliferation. May act as tumor suppressor. In Rattus norvegicus (Rat), this protein is Leucine zipper putative tumor suppressor 1 (Lzts1).